Reading from the N-terminus, the 285-residue chain is MFKDFFNRTKKKKYLTVQDSKNNDVPAGIMTKCPKCKKIMYTKELAENLNVCFNCDHHIALTAYKRIEAISDEGSFTEFDKGMTSANPLDFPSYLEKIEKDQQKTGLKEAVVTGTAQLDGMKFGVAVMDSRFRMGSMGSVIGEKICRIIDYCTENRLPFILFSASGGARMQEGIISLMQMGKTSVSLKRHSDAGLLYISYLTHPTTGGVSASFASVGDINLSEPKALIGFAGRRVIEQTINEKLPDDFQTAEFLLEHGQLDKVVHRNDMRQTLSEILKIHQEVTK.

In terms of domain architecture, CoA carboxyltransferase N-terminal spans 29 to 285; sequence IMTKCPKCKK…ILKIHQEVTK (257 aa). Cys33, Cys36, Cys52, and Cys55 together coordinate Zn(2+). The C4-type zinc finger occupies 33–55; sequence CPKCKKIMYTKELAENLNVCFNC.

This sequence belongs to the AccD/PCCB family. In terms of assembly, acetyl-CoA carboxylase is a heterohexamer composed of biotin carboxyl carrier protein (AccB), biotin carboxylase (AccC) and two subunits each of ACCase subunit alpha (AccA) and ACCase subunit beta (AccD). Zn(2+) is required as a cofactor.

It localises to the cytoplasm. The enzyme catalyses N(6)-carboxybiotinyl-L-lysyl-[protein] + acetyl-CoA = N(6)-biotinyl-L-lysyl-[protein] + malonyl-CoA. Its pathway is lipid metabolism; malonyl-CoA biosynthesis; malonyl-CoA from acetyl-CoA: step 1/1. In terms of biological role, component of the acetyl coenzyme A carboxylase (ACC) complex. Biotin carboxylase (BC) catalyzes the carboxylation of biotin on its carrier protein (BCCP) and then the CO(2) group is transferred by the transcarboxylase to acetyl-CoA to form malonyl-CoA. The sequence is that of Acetyl-coenzyme A carboxylase carboxyl transferase subunit beta from Staphylococcus aureus (strain Mu3 / ATCC 700698).